We begin with the raw amino-acid sequence, 377 residues long: tRNA 2-selenouridine synthase (377 aa).

One can recognise a Rhodanese domain in the interval 18-141; it reads ITRGVTLIDV…LRQEAMDATD (124 aa). Catalysis depends on cysteine 101, which acts as the S-selanylcysteine intermediate.

This sequence belongs to the SelU family. Monomer.

The enzyme catalyses 5-methylaminomethyl-2-thiouridine(34) in tRNA + selenophosphate + (2E)-geranyl diphosphate + H2O + H(+) = 5-methylaminomethyl-2-selenouridine(34) in tRNA + (2E)-thiogeraniol + phosphate + diphosphate. It carries out the reaction 5-methylaminomethyl-2-thiouridine(34) in tRNA + (2E)-geranyl diphosphate = 5-methylaminomethyl-S-(2E)-geranyl-thiouridine(34) in tRNA + diphosphate. It catalyses the reaction 5-methylaminomethyl-S-(2E)-geranyl-thiouridine(34) in tRNA + selenophosphate + H(+) = 5-methylaminomethyl-2-(Se-phospho)selenouridine(34) in tRNA + (2E)-thiogeraniol. The catalysed reaction is 5-methylaminomethyl-2-(Se-phospho)selenouridine(34) in tRNA + H2O = 5-methylaminomethyl-2-selenouridine(34) in tRNA + phosphate. Involved in the post-transcriptional modification of the uridine at the wobble position (U34) of tRNA(Lys), tRNA(Glu) and tRNA(Gln). Catalyzes the conversion of 2-thiouridine (S2U-RNA) to 2-selenouridine (Se2U-RNA). Acts in a two-step process involving geranylation of 2-thiouridine (S2U) to S-geranyl-2-thiouridine (geS2U) and subsequent selenation of the latter derivative to 2-selenouridine (Se2U) in the tRNA chain. The polypeptide is tRNA 2-selenouridine synthase (Cronobacter sakazakii (strain ATCC BAA-894) (Enterobacter sakazakii)).